A 125-amino-acid chain; its full sequence is Small ribosomal subunit protein bS6 (125 aa).

The tract at residues 100 to 125 (SPMVKAREERKPLTEVENNDFEDAEE) is disordered. Basic and acidic residues predominate over residues 104–113 (KAREERKPLT). The segment covering 116–125 (ENNDFEDAEE) has biased composition (acidic residues).

Belongs to the bacterial ribosomal protein bS6 family.

Its function is as follows. Binds together with bS18 to 16S ribosomal RNA. The polypeptide is Small ribosomal subunit protein bS6 (Histophilus somni (strain 129Pt) (Haemophilus somnus)).